Reading from the N-terminus, the 241-residue chain is Proteasome subunit alpha (241 aa).

This sequence belongs to the peptidase T1A family. The 20S proteasome core is composed of 14 alpha and 14 beta subunits that assemble into four stacked heptameric rings, resulting in a barrel-shaped structure. The two inner rings, each composed of seven catalytic beta subunits, are sandwiched by two outer rings, each composed of seven alpha subunits. The catalytic chamber with the active sites is on the inside of the barrel. Has a gated structure, the ends of the cylinder being occluded by the N-termini of the alpha-subunits. Is capped at one or both ends by the proteasome regulatory ATPase, PAN.

Its subcellular location is the cytoplasm. The formation of the proteasomal ATPase PAN-20S proteasome complex, via the docking of the C-termini of PAN into the intersubunit pockets in the alpha-rings, triggers opening of the gate for substrate entry. Interconversion between the open-gate and close-gate conformations leads to a dynamic regulation of the 20S proteasome proteolysis activity. Functionally, component of the proteasome core, a large protease complex with broad specificity involved in protein degradation. This Saccharolobus solfataricus (strain ATCC 35092 / DSM 1617 / JCM 11322 / P2) (Sulfolobus solfataricus) protein is Proteasome subunit alpha.